The chain runs to 255 residues: Hydroxyethylthiazole kinase (255 aa).

Residue Met38 participates in substrate binding. ATP is bound by residues Arg114 and Thr160. Gly187 provides a ligand contact to substrate.

This sequence belongs to the Thz kinase family. It depends on Mg(2+) as a cofactor.

It catalyses the reaction 5-(2-hydroxyethyl)-4-methylthiazole + ATP = 4-methyl-5-(2-phosphooxyethyl)-thiazole + ADP + H(+). The protein operates within cofactor biosynthesis; thiamine diphosphate biosynthesis; 4-methyl-5-(2-phosphoethyl)-thiazole from 5-(2-hydroxyethyl)-4-methylthiazole: step 1/1. Its function is as follows. Catalyzes the phosphorylation of the hydroxyl group of 4-methyl-5-beta-hydroxyethylthiazole (THZ). This chain is Hydroxyethylthiazole kinase, found in Lysinibacillus sphaericus (strain C3-41).